We begin with the raw amino-acid sequence, 508 residues long: WD repeat-containing protein JIP5 (508 aa).

WD repeat units follow at residues 46 to 94, 105 to 144, 150 to 189, 194 to 234, 252 to 293, and 344 to 381; these read LATG…GVET, RHKG…VVKK, GQNV…QTNL, HNGD…EGDF, DQED…LADQ, and SKLD…QLTP. Residues 372 to 508 are disordered; that stretch reads DSEKSEQLTP…THGIRRFEGL (137 aa). A compositionally biased stretch (basic and acidic residues) spans 491 to 508; it reads IKPERSMKTHGIRRFEGL.

The protein belongs to the WD repeat WDR55 family.

The protein resides in the nucleus. Its subcellular location is the nucleolus. This is WD repeat-containing protein JIP5 (JIP5) from Eremothecium gossypii (strain ATCC 10895 / CBS 109.51 / FGSC 9923 / NRRL Y-1056) (Yeast).